A 245-amino-acid polypeptide reads, in one-letter code: Type III pantothenate kinase (245 aa).

Asp-6–Lys-13 contacts ATP. Residues Tyr-86 and Gly-93–Arg-96 each bind substrate. Asp-95 (proton acceptor) is an active-site residue. A K(+)-binding site is contributed by Asp-116. Thr-119 contacts ATP. Thr-171 is a substrate binding site.

It belongs to the type III pantothenate kinase family. As to quaternary structure, homodimer. The cofactor is NH4(+). It depends on K(+) as a cofactor.

The protein localises to the cytoplasm. The catalysed reaction is (R)-pantothenate + ATP = (R)-4'-phosphopantothenate + ADP + H(+). The protein operates within cofactor biosynthesis; coenzyme A biosynthesis; CoA from (R)-pantothenate: step 1/5. Functionally, catalyzes the phosphorylation of pantothenate (Pan), the first step in CoA biosynthesis. The chain is Type III pantothenate kinase from Azobacteroides pseudotrichonymphae genomovar. CFP2.